Consider the following 526-residue polypeptide: Lycopene epsilon cyclase, chloroplastic (526 aa).

108-136 (LVVIGCGPAGLALAAESAKLGLNVGLVGP) serves as a coordination point for NAD(+). Helical transmembrane passes span 443–463 (FFLF…RSFF) and 477–497 (FLGS…MFII).

This sequence belongs to the lycopene cyclase family.

It localises to the plastid. It is found in the chloroplast membrane. It catalyses the reaction a carotenoid psi-end group = a carotenoid epsilon-end group. The protein operates within carotenoid biosynthesis; alpha-zeacarotene biosynthesis. It participates in carotenoid biosynthesis; delta-carotene biosynthesis. Its function is as follows. Catalyzes the single cyclization reaction which converts lycopene to delta-carotene and neurosporene to alpha-zeacarotene. Required for lutein biosynthesis. The sequence is that of Lycopene epsilon cyclase, chloroplastic from Solanum lycopersicum (Tomato).